The chain runs to 453 residues: Nuclear and cytoplasmic polyadenylated RNA-binding protein PUB1 (453 aa).

The disordered stretch occupies residues 1–67 (MSENNEEQHQ…PSVVPANAIT (67 aa)). Ser-2 carries the post-translational modification N-acetylserine. RRM domains are found at residues 75–152 (RVLY…WAFQ) and 162–240 (FNLF…WAAK). Positions 241-262 (RDNNNNNNYQQRRNYGNNNRGG) are disordered. The span at 244 to 262 (NNNNNYQQRRNYGNNNRGG) shows a compositional bias: low complexity. Residue Arg-260 is modified to Omega-N-methylarginine. The segment at 260–264 (RGGFR) is RNA-binding RGG-box. The RRM 3 domain occupies 341–413 (TTAYIGNIPH…RNLRTGWGKE (73 aa)). The disordered stretch occupies residues 419 to 453 (PQQQQQGGQPLIMNDQQQPVMSEQQQQQQQQQQQQ). Residues 434–453 (QQQPVMSEQQQQQQQQQQQQ) are compositionally biased toward low complexity.

As to quaternary structure, interacts with NAB2.

It is found in the cytoplasm. It localises to the nucleus. The protein localises to the P-body. Its subcellular location is the stress granule. In terms of biological role, may be associated with hnRNA within the nucleus and remains associated during nucleocytoplasmic mRNA transport, once the proteins are in the cytoplasm, disassembly of PUB1-RNA complexes may occur prior to PAB1 binding and formation of a translationally competent RNP complex. Binds to polyadenylated RNA; prefers to bind poly(rU); binds to T-rich single-stranded DNA. This chain is Nuclear and cytoplasmic polyadenylated RNA-binding protein PUB1, found in Saccharomyces cerevisiae (strain ATCC 204508 / S288c) (Baker's yeast).